A 333-amino-acid polypeptide reads, in one-letter code: Large ribosomal subunit protein uL3 (333 aa).

This sequence belongs to the universal ribosomal protein uL3 family. As to quaternary structure, part of the 50S ribosomal subunit. Forms a cluster with proteins L14 and L24e.

One of the primary rRNA binding proteins, it binds directly near the 3'-end of the 23S rRNA, where it nucleates assembly of the 50S subunit. In Methanocorpusculum labreanum (strain ATCC 43576 / DSM 4855 / Z), this protein is Large ribosomal subunit protein uL3.